The chain runs to 413 residues: ATP phosphoribosyltransferase regulatory subunit (413 aa).

Positions 1 to 21 (MRSRAARKFSTTPGTRDVLPP) are disordered.

Belongs to the class-II aminoacyl-tRNA synthetase family. HisZ subfamily. Heteromultimer composed of HisG and HisZ subunits.

Its subcellular location is the cytoplasm. It participates in amino-acid biosynthesis; L-histidine biosynthesis; L-histidine from 5-phospho-alpha-D-ribose 1-diphosphate: step 1/9. Required for the first step of histidine biosynthesis. May allow the feedback regulation of ATP phosphoribosyltransferase activity by histidine. The polypeptide is ATP phosphoribosyltransferase regulatory subunit (Rubrobacter xylanophilus (strain DSM 9941 / JCM 11954 / NBRC 16129 / PRD-1)).